A 247-amino-acid polypeptide reads, in one-letter code: 1-(5-phosphoribosyl)-5-[(5-phosphoribosylamino)methylideneamino] imidazole-4-carboxamide isomerase (247 aa).

Catalysis depends on aspartate 8, which acts as the Proton acceptor. Catalysis depends on aspartate 131, which acts as the Proton donor.

Belongs to the HisA/HisF family.

The protein localises to the cytoplasm. It carries out the reaction 1-(5-phospho-beta-D-ribosyl)-5-[(5-phospho-beta-D-ribosylamino)methylideneamino]imidazole-4-carboxamide = 5-[(5-phospho-1-deoxy-D-ribulos-1-ylimino)methylamino]-1-(5-phospho-beta-D-ribosyl)imidazole-4-carboxamide. It participates in amino-acid biosynthesis; L-histidine biosynthesis; L-histidine from 5-phospho-alpha-D-ribose 1-diphosphate: step 4/9. In Methylobacillus flagellatus (strain ATCC 51484 / DSM 6875 / VKM B-1610 / KT), this protein is 1-(5-phosphoribosyl)-5-[(5-phosphoribosylamino)methylideneamino] imidazole-4-carboxamide isomerase.